Here is a 195-residue protein sequence, read N- to C-terminus: Molybdenum cofactor guanylyltransferase (195 aa).

GTP is bound by residues 12–14, Lys-25, Asn-53, Asp-70, and Asp-100; that span reads LAG. Mg(2+) is bound at residue Asp-100.

This sequence belongs to the MobA family. Monomer. Mg(2+) is required as a cofactor.

It is found in the cytoplasm. The catalysed reaction is Mo-molybdopterin + GTP + H(+) = Mo-molybdopterin guanine dinucleotide + diphosphate. Transfers a GMP moiety from GTP to Mo-molybdopterin (Mo-MPT) cofactor (Moco or molybdenum cofactor) to form Mo-molybdopterin guanine dinucleotide (Mo-MGD) cofactor. This Vibrio vulnificus (strain YJ016) protein is Molybdenum cofactor guanylyltransferase.